A 323-amino-acid polypeptide reads, in one-letter code: 8-oxo-dGDP phosphatase NUDT18 (323 aa).

Residues 37-167 (RLRKNVCYVV…DILHLVELAA (131 aa)) enclose the Nudix hydrolase domain. Leucine 58 contacts Mg(2+). The Nudix box signature appears at 76-97 (GRMEPGETIVEALQREVKEEAG).

It belongs to the Nudix hydrolase family. It depends on Mn(2+) as a cofactor. Mg(2+) serves as cofactor.

The catalysed reaction is 8-oxo-dGDP + H2O = 8-oxo-dGMP + phosphate + H(+). It catalyses the reaction 8-oxo-dADP + H2O = 8-oxo-dAMP + phosphate + H(+). It carries out the reaction 2-oxo-dADP + H2O = 2-oxo-dAMP + phosphate + H(+). The enzyme catalyses 8-oxo-GDP + H2O = 8-oxo-GMP + phosphate + H(+). Mediates the hydrolysis of oxidized nucleoside diphosphate derivatives. Hydrolyzes 8-oxo-7,8-dihydroguanine (8-oxo-Gua)-containing deoxyribo- and ribonucleoside diphosphates to the monophosphates. Hydrolyzes 8-oxo-dGDP and 8-oxo-GDP with the same efficiencies. Also hydrolyzes 8-OH-dADP and 2-OH-dADP. Exhibited no or minimal hydrolysis activity against 8-oxo-dGTP, 8-oxo-GTP, dGTP, GTP, dGDP and GDP. Probably removes oxidized guanine nucleotides from both the DNA and RNA precursor pools. The polypeptide is 8-oxo-dGDP phosphatase NUDT18 (Homo sapiens (Human)).